A 303-amino-acid chain; its full sequence is Coenzyme PQQ synthesis protein B (303 aa).

It belongs to the PqqB family.

It participates in cofactor biosynthesis; pyrroloquinoline quinone biosynthesis. Functionally, may be involved in the transport of PQQ or its precursor to the periplasm. This Pseudomonas putida (strain ATCC 700007 / DSM 6899 / JCM 31910 / BCRC 17059 / LMG 24140 / F1) protein is Coenzyme PQQ synthesis protein B.